A 262-amino-acid chain; its full sequence is Octopine permease ATP-binding protein P (262 aa).

Residues 9–254 (VKLTGIRKNF…PRTERFRQFL (246 aa)) form the ABC transporter domain. Residue 41–48 (GSSGSGKS) participates in ATP binding.

It belongs to the ABC transporter superfamily.

It localises to the cell inner membrane. In terms of biological role, component of the octopine active transport system probably consisting of four subunits: Q, M, P and T. The chain is Octopine permease ATP-binding protein P (occP) from Rhizobium meliloti (Ensifer meliloti).